Consider the following 382-residue polypeptide: Glutamyl-tRNA reductase (382 aa).

Substrate-binding positions include 38-41 (TCNR), S85, 90-92 (ENQ), and Q96. C39 functions as the Nucleophile in the catalytic mechanism. An NADP(+)-binding site is contributed by 164-169 (GAGEIG).

The protein belongs to the glutamyl-tRNA reductase family. As to quaternary structure, homodimer.

It carries out the reaction (S)-4-amino-5-oxopentanoate + tRNA(Glu) + NADP(+) = L-glutamyl-tRNA(Glu) + NADPH + H(+). Its pathway is porphyrin-containing compound metabolism; protoporphyrin-IX biosynthesis; 5-aminolevulinate from L-glutamyl-tRNA(Glu): step 1/2. Functionally, catalyzes the NADPH-dependent reduction of glutamyl-tRNA(Glu) to glutamate 1-semialdehyde (GSA). In Methanococcus maripaludis (strain DSM 14266 / JCM 13030 / NBRC 101832 / S2 / LL), this protein is Glutamyl-tRNA reductase.